The primary structure comprises 49 residues: Large ribosomal subunit protein bL33B (49 aa).

Belongs to the bacterial ribosomal protein bL33 family.

This is Large ribosomal subunit protein bL33B from Bacillus cereus (strain ATCC 14579 / DSM 31 / CCUG 7414 / JCM 2152 / NBRC 15305 / NCIMB 9373 / NCTC 2599 / NRRL B-3711).